Here is a 363-residue protein sequence, read N- to C-terminus: MIIDTTEVQAINSFSRLESSKEVYGLIWLFIPIFTPVSGITIGVLVIVWLEREISAGIQQRIGPEYAGPLGILQAIADGTKLLFKEDLLPSRGDIRLFSIGPSVVVISILLSHLVIPFGYRLVLADLSIGVSLWIAISSIAPIGLLMSGYASNNKYSFSGGLRAAAQSISYEIPLTLCVLSISLLSNSSSTVDIVEAQYKYGFWGWNLWRQPIGFLAFLISSLAECERLPFDLPEAEEELVAGYQTEYSGIKFGLFYLASYLNLLVSSLFVTVLYLGGWNLSIPYIAIPELFRINRIGGVFGTTISIFFTLAKAYLFLFIPITTRWTLPRMRMDQLLNLGWKFLLPIALGNLLLTTSSQLFSL.

6 helical membrane-spanning segments follow: residues 27–47 (IWLF…VLVI), 98–118 (FSIG…VIPF), 127–147 (LSIG…GLLM), 248–268 (YSGI…LVSS), 300–320 (VFGT…FLFI), and 336–356 (LLNL…LLTT).

It belongs to the complex I subunit 1 family. In terms of assembly, NDH is composed of at least 16 different subunits, 5 of which are encoded in the nucleus.

It is found in the plastid. The protein localises to the chloroplast thylakoid membrane. It catalyses the reaction a plastoquinone + NADH + (n+1) H(+)(in) = a plastoquinol + NAD(+) + n H(+)(out). The enzyme catalyses a plastoquinone + NADPH + (n+1) H(+)(in) = a plastoquinol + NADP(+) + n H(+)(out). NDH shuttles electrons from NAD(P)H:plastoquinone, via FMN and iron-sulfur (Fe-S) centers, to quinones in the photosynthetic chain and possibly in a chloroplast respiratory chain. The immediate electron acceptor for the enzyme in this species is believed to be plastoquinone. Couples the redox reaction to proton translocation, and thus conserves the redox energy in a proton gradient. The polypeptide is NAD(P)H-quinone oxidoreductase subunit 1, chloroplastic (Amborella trichopoda).